A 76-amino-acid polypeptide reads, in one-letter code: MSIEERVKKIIVEQLGVKEDEVKPEASFVEDLGADSLDTVELVMALEEEFDIEIPDEEAEKITTVQSAIDYVQNNQ.

Residues 1–76 (MSIEERVKKI…SAIDYVQNNQ (76 aa)) enclose the Carrier domain. S36 is subject to O-(pantetheine 4'-phosphoryl)serine.

It belongs to the acyl carrier protein (ACP) family. In terms of processing, 4'-phosphopantetheine is transferred from CoA to a specific serine of apo-ACP by AcpS. This modification is essential for activity because fatty acids are bound in thioester linkage to the sulfhydryl of the prosthetic group.

It is found in the cytoplasm. It functions in the pathway lipid metabolism; fatty acid biosynthesis. Functionally, carrier of the growing fatty acid chain in fatty acid biosynthesis. The sequence is that of Acyl carrier protein from Pasteurella multocida (strain Pm70).